A 119-amino-acid chain; its full sequence is NADH-quinone oxidoreductase subunit A (119 aa).

3 consecutive transmembrane segments (helical) span residues 9 to 29 (VLLF…LGYV), 63 to 83 (LVAI…PWAV), and 88 to 108 (VGVT…VGFA).

This sequence belongs to the complex I subunit 3 family. In terms of assembly, NDH-1 is composed of 14 different subunits. Subunits NuoA, H, J, K, L, M, N constitute the membrane sector of the complex.

It localises to the cell inner membrane. The enzyme catalyses a quinone + NADH + 5 H(+)(in) = a quinol + NAD(+) + 4 H(+)(out). Functionally, NDH-1 shuttles electrons from NADH, via FMN and iron-sulfur (Fe-S) centers, to quinones in the respiratory chain. The immediate electron acceptor for the enzyme in this species is believed to be ubiquinone. Couples the redox reaction to proton translocation (for every two electrons transferred, four hydrogen ions are translocated across the cytoplasmic membrane), and thus conserves the redox energy in a proton gradient. In Acidovorax sp. (strain JS42), this protein is NADH-quinone oxidoreductase subunit A.